Consider the following 360-residue polypeptide: MTTVLQRRQTANLWERFCDWITSTENRLYIGWFGVIMIPTLLAATICFVIAFIAAPPVDIDGIREPVSGSLLYGNNIITAAVVPSSNAIGLHLYPIWDAASLDEWLYNGGPYQLIIFHFLIGIFCYMGREWELSYRLGMRPWIPVAFSAPVAAATAVLLIYPIGQGSFSDGLMLGISGTFNFMIVFQAEHNILMHPFHMLGVAGVFGGALFAAMHGSLVTSSLIRETTETESTNYGYKFGQEEETYNIVAAHGYFGRLIFQYASFNNSRSLHFFLAAWPVVGIWFAALGISTMAFNLNGFNFNHSVVDAQGNVINTWADIINRANIGIEVMHERNAHNFPLDLASGELAPVAMIAPSIEA.

3 consecutive transmembrane segments (helical) span residues 29-46 (YIGW…AATI), 118-133 (HFLI…EWEL), and 142-156 (WIPV…AATA). H118 lines the chlorophyll a pocket. Y126 is a binding site for pheophytin a. [CaMn4O5] cluster is bound by residues D170 and E189. The chain crosses the membrane as a helical span at residues 197 to 218 (FHMLGVAGVFGGALFAAMHGSL). H198 is a chlorophyll a binding site. A quinone is bound by residues H215 and 264–265 (SF). H215 contributes to the Fe cation binding site. H272 lines the Fe cation pocket. A helical transmembrane segment spans residues 274 to 288 (FLAAWPVVGIWFAAL). H332, E333, D342, and A344 together coordinate [CaMn4O5] cluster. Residues 345–360 (SGELAPVAMIAPSIEA) constitute a propeptide that is removed on maturation.

This sequence belongs to the reaction center PufL/M/PsbA/D family. In terms of assembly, PSII is composed of 1 copy each of membrane proteins PsbA, PsbB, PsbC, PsbD, PsbE, PsbF, PsbH, PsbI, PsbJ, PsbK, PsbL, PsbM, PsbT, PsbX, PsbY, PsbZ, Psb30/Ycf12, peripheral proteins PsbO, CyanoQ (PsbQ), PsbU, PsbV and a large number of cofactors. It forms dimeric complexes. The cofactor is The D1/D2 heterodimer binds P680, chlorophylls that are the primary electron donor of PSII, and subsequent electron acceptors. It shares a non-heme iron and each subunit binds pheophytin, quinone, additional chlorophylls, carotenoids and lipids. D1 provides most of the ligands for the Mn4-Ca-O5 cluster of the oxygen-evolving complex (OEC). There is also a Cl(-1) ion associated with D1 and D2, which is required for oxygen evolution. The PSII complex binds additional chlorophylls, carotenoids and specific lipids.. Post-translationally, tyr-161 forms a radical intermediate that is referred to as redox-active TyrZ, YZ or Y-Z. In terms of processing, C-terminally processed by CtpA; processing is essential to allow assembly of the oxygen-evolving complex and thus photosynthetic growth.

The protein localises to the cellular thylakoid membrane. The catalysed reaction is 2 a plastoquinone + 4 hnu + 2 H2O = 2 a plastoquinol + O2. Its function is as follows. Photosystem II (PSII) is a light-driven water:plastoquinone oxidoreductase that uses light energy to abstract electrons from H(2)O, generating O(2) and a proton gradient subsequently used for ATP formation. It consists of a core antenna complex that captures photons, and an electron transfer chain that converts photonic excitation into a charge separation. The D1/D2 (PsbA/PsbD) reaction center heterodimer binds P680, the primary electron donor of PSII as well as several subsequent electron acceptors. This is Photosystem II protein D1 2 from Synechococcus elongatus.